An 83-amino-acid polypeptide reads, in one-letter code: Putative protein T-ENOL (83 aa).

The tract at residues 1–33 (MASTPMGNEGEKKSSWPSQAAPSLRGGPASLSR) is disordered.

The chain is Putative protein T-ENOL from Homo sapiens (Human).